Here is a 120-residue protein sequence, read N- to C-terminus: Anti-adapter protein IraM (120 aa).

This sequence belongs to the IraM/RssC family.

The protein localises to the cytoplasm. In terms of biological role, involved in the stabilization of the sigma stress factor RpoS. This Salmonella choleraesuis (strain SC-B67) protein is Anti-adapter protein IraM.